A 273-amino-acid chain; its full sequence is Ribosomal RNA small subunit methyltransferase A (273 aa).

Residues asparagine 18, leucine 20, glycine 45, glutamate 66, aspartate 91, and asparagine 113 each coordinate S-adenosyl-L-methionine.

It belongs to the class I-like SAM-binding methyltransferase superfamily. rRNA adenine N(6)-methyltransferase family. RsmA subfamily.

The protein resides in the cytoplasm. It catalyses the reaction adenosine(1518)/adenosine(1519) in 16S rRNA + 4 S-adenosyl-L-methionine = N(6)-dimethyladenosine(1518)/N(6)-dimethyladenosine(1519) in 16S rRNA + 4 S-adenosyl-L-homocysteine + 4 H(+). Specifically dimethylates two adjacent adenosines (A1518 and A1519) in the loop of a conserved hairpin near the 3'-end of 16S rRNA in the 30S particle. May play a critical role in biogenesis of 30S subunits. The sequence is that of Ribosomal RNA small subunit methyltransferase A from Escherichia coli O157:H7.